A 429-amino-acid polypeptide reads, in one-letter code: UDP-N-acetylglucosamine 1-carboxyvinyltransferase (429 aa).

22–23 (KN) contacts phosphoenolpyruvate. Arg-102 contributes to the UDP-N-acetyl-alpha-D-glucosamine binding site. The Proton donor role is filled by Cys-126. Cys-126 bears the 2-(S-cysteinyl)pyruvic acid O-phosphothioketal mark. Residues 131-135 (RPVDL), Asp-316, and Ile-338 each bind UDP-N-acetyl-alpha-D-glucosamine.

This sequence belongs to the EPSP synthase family. MurA subfamily.

Its subcellular location is the cytoplasm. The catalysed reaction is phosphoenolpyruvate + UDP-N-acetyl-alpha-D-glucosamine = UDP-N-acetyl-3-O-(1-carboxyvinyl)-alpha-D-glucosamine + phosphate. The protein operates within cell wall biogenesis; peptidoglycan biosynthesis. Cell wall formation. Adds enolpyruvyl to UDP-N-acetylglucosamine. This chain is UDP-N-acetylglucosamine 1-carboxyvinyltransferase, found in Methylobacterium radiotolerans (strain ATCC 27329 / DSM 1819 / JCM 2831 / NBRC 15690 / NCIMB 10815 / 0-1).